A 455-amino-acid chain; its full sequence is Bifunctional protein GlmU (455 aa).

Positions 1-228 are pyrophosphorylase; sequence MTQPLHVIIL…AQEAEGANDP (228 aa). UDP-N-acetyl-alpha-D-glucosamine is bound by residues 10–13, Lys-24, Gln-76, 81–82, 103–105, Gly-138, Glu-153, Asn-168, and Asn-226; these read LAAG, GT, and YGD. Asp-105 provides a ligand contact to Mg(2+). Asn-226 serves as a coordination point for Mg(2+). The interval 229–249 is linker; sequence WQLSQLERAWQRRAVRALCAQ. The tract at residues 250–455 is N-acetyltransferase; sequence GARVRDPARL…DGWKRPLKKS (206 aa). The UDP-N-acetyl-alpha-D-glucosamine site is built by Arg-332 and Lys-350. Residue His-362 is the Proton acceptor of the active site. UDP-N-acetyl-alpha-D-glucosamine is bound by residues Tyr-365 and Asn-376. Residues Ala-379, 385-386, Ser-404, Ala-422, and Arg-439 each bind acetyl-CoA; that span reads NY.

The protein in the N-terminal section; belongs to the N-acetylglucosamine-1-phosphate uridyltransferase family. This sequence in the C-terminal section; belongs to the transferase hexapeptide repeat family. As to quaternary structure, homotrimer. Mg(2+) serves as cofactor.

It is found in the cytoplasm. The enzyme catalyses alpha-D-glucosamine 1-phosphate + acetyl-CoA = N-acetyl-alpha-D-glucosamine 1-phosphate + CoA + H(+). It catalyses the reaction N-acetyl-alpha-D-glucosamine 1-phosphate + UTP + H(+) = UDP-N-acetyl-alpha-D-glucosamine + diphosphate. It functions in the pathway nucleotide-sugar biosynthesis; UDP-N-acetyl-alpha-D-glucosamine biosynthesis; N-acetyl-alpha-D-glucosamine 1-phosphate from alpha-D-glucosamine 6-phosphate (route II): step 2/2. Its pathway is nucleotide-sugar biosynthesis; UDP-N-acetyl-alpha-D-glucosamine biosynthesis; UDP-N-acetyl-alpha-D-glucosamine from N-acetyl-alpha-D-glucosamine 1-phosphate: step 1/1. The protein operates within bacterial outer membrane biogenesis; LPS lipid A biosynthesis. Functionally, catalyzes the last two sequential reactions in the de novo biosynthetic pathway for UDP-N-acetylglucosamine (UDP-GlcNAc). The C-terminal domain catalyzes the transfer of acetyl group from acetyl coenzyme A to glucosamine-1-phosphate (GlcN-1-P) to produce N-acetylglucosamine-1-phosphate (GlcNAc-1-P), which is converted into UDP-GlcNAc by the transfer of uridine 5-monophosphate (from uridine 5-triphosphate), a reaction catalyzed by the N-terminal domain. This is Bifunctional protein GlmU from Stenotrophomonas maltophilia (strain R551-3).